The primary structure comprises 740 residues: Arf-GAP with coiled-coil, ANK repeat and PH domain-containing protein 1 (740 aa).

The region spanning 1-226 is the BAR domain; that stretch reads MTVKLDFEEC…RKELGTQLHN (226 aa). Residues 1–382 form a required for formation of endosomal tubules when overexpressed with PIP5K1C region; the sequence is MTVKLDFEEC…RGPGQVSGYH (382 aa). The PH domain maps to 265–360; the sequence is GLVMEGHLFK…WVSAVQSSIA (96 aa). One can recognise an Arf-GAP domain in the interval 405–527; the sequence is GQVAAQVQSV…KFLTKLPEIR (123 aa). Residues 405 to 740 are required for interaction with GULP1; it reads GQVAAQVQSV…SRRSHDLHTL (336 aa). Residues 420 to 443 form a C4-type zinc finger; sequence CCDCREPAPEWASINLGVTLCIQC. Tyrosine 485 carries the post-translational modification 3'-nitrotyrosine. The interval 525 to 562 is disordered; the sequence is EIRGRRGGRGPPRGHPPVPPKPPIRPHSGIVRSKSECP. Residues 525–566 form a prevents interaction with ITGB1 when S-554 is not phosphorylated region; the sequence is EIRGRRGGRGPPRGHPPVPPKPPIRPHSGIVRSKSECPSDDM. A compositionally biased stretch (pro residues) spans 537–549; sequence RGHPPVPPKPPIR. ANK repeat units follow at residues 606–635, 639–668, and 672–702; these read GNAT…NVNQ, AGRG…DLGA, and EGRD…EAEA.

In terms of assembly, banana-shaped homodimer laterally assembling into tetramers, the tetramers further pack helically onto the membrane. Interacts with GTP-bound ARF6. Interacts with third cytoplasmic loop of SLC2A4/GLUT4. Interacts with CLTC. Interacts with GULP1. Forms a complex with GDP-bound ARF6 and GULP1. Interacts with ITGB1; required for ITGB1 recycling.

The protein localises to the recycling endosome membrane. GAP activity stimulated by phosphatidylinositol 4,5-bisphosphate (PIP2) and phosphatidic acid. Functionally, GTPase-activating protein (GAP) for ADP ribosylation factor 6 (ARF6) required for clathrin-dependent export of proteins from recycling endosomes to trans-Golgi network and cell surface. Required for regulated export of ITGB1 from recycling endosomes to the cell surface and ITGB1-dependent cell migration. This Mus musculus (Mouse) protein is Arf-GAP with coiled-coil, ANK repeat and PH domain-containing protein 1 (Acap1).